Here is a 114-residue protein sequence, read N- to C-terminus: uncharacterized protein (114 aa).

This sequence to M.kandleri MK0008.

This is an uncharacterized protein from Methanocaldococcus jannaschii (strain ATCC 43067 / DSM 2661 / JAL-1 / JCM 10045 / NBRC 100440) (Methanococcus jannaschii).